The sequence spans 201 residues: Small ribosomal subunit protein uS4c (201 aa).

The interval 20–44 (GLTSKRPRAGSDLRNQSRSGKKSQY) is disordered. Positions 89-152 (MRLDNTLFRL…NSRTLVQNLL (64 aa)) constitute an S4 RNA-binding domain.

Belongs to the universal ribosomal protein uS4 family. As to quaternary structure, part of the 30S ribosomal subunit. Contacts protein S5. The interaction surface between S4 and S5 is involved in control of translational fidelity.

The protein resides in the plastid. The protein localises to the chloroplast. In terms of biological role, one of the primary rRNA binding proteins, it binds directly to 16S rRNA where it nucleates assembly of the body of the 30S subunit. Its function is as follows. With S5 and S12 plays an important role in translational accuracy. The protein is Small ribosomal subunit protein uS4c (rps4) of Aethionema grandiflorum (Persian stone-cress).